Consider the following 451-residue polypeptide: Scaffold protein ILK (451 aa).

N-acetylmethionine is present on Met-1. ANK repeat units follow at residues 2-30 (DDIF…LNQG), 31-63 (DDHG…INVM), 64-96 (NRGD…INAV), 97-129 (NEHG…VSIC), and 130-174 (NKYG…GTTR). The interval 33-139 (HGFSPLHWAC…NKYGEMPMDK (107 aa)) is interaction with LIMS1. Phosphothreonine is present on Thr-173. The PH-like; mediates interaction with TGFB1I1 stretch occupies residues 180–212 (GTLNKHSGIDFKQLNFLAKLNENHSGELWKGRW). The residue at position 186 (Ser-186) is a Phosphoserine. The 253-residue stretch at 193-445 (LNFLAKLNEN…PKFDMIVPIL (253 aa)) folds into the Protein kinase domain. Residues Asn-200, Asn-202, His-203, and Ser-204 each coordinate ATP. Ser-246 is modified (phosphoserine). ATP contacts are provided by His-270, Met-272, and Asn-279. Residue Asp-339 participates in Mg(2+) binding. Lys-341 provides a ligand contact to ATP. Positions 363–371 (KKPEDTNRR) match the Nuclear localization signal motif. Residue Lys-425 is modified to N6-acetyllysine.

Belongs to the protein kinase superfamily. TKL Ser/Thr protein kinase family. As to quaternary structure, component of the heterotrimeric IPP (ILK-PINCH-PARVIN) complex composed of ILK, LIMS1/PINCH and PARVA; the complex binds to F-actin via the C-terminal tail of LIMS1 and the N-terminal region of PARVA, promoting F-actin filament bundling. Formation of the IPP complex is dependent on protein kinase C and precedes integrin-mediated cell adhesion and spreading. ILK also interacts with LIMS2/PINCH2 and with PARVB and PARVG which may substitute for LIMS1 and PARVA in the IPP complex; PARVA and PARVB compete for the same binding site. Interaction with PARVG promotes the establishment of cell polarity required for leukocyte migration. Interacts with the cytoplasmic domain of integrin ITGB1 and may also interact with integrins ITGB2, ITGB3 and/or ITGB5. Interacts probably also with TGFB1I1. Interacts (via ANK repeats) with EPHA1 (via SAM domain); stimulated by EFNA1 but independent of the kinase activity of EPHA1. Interacts with FERMT2. Interacts with LIMD2; leading to activate the protein kinase activity. Interacts with PXN/PAXILLIN (via LD motif 4). Interacts with CCDC25 (via cytoplasmic region); initiating the ILK-PARVB cascade to induce cytoskeleton rearrangement and directional migration of cells. Interacts with IQGAP1; the interaction is required for localization of IQGAP1 to the cell cortex. Phosphorylation by PAK1 modulates ILK subcellular location by promoting its nuclear export.

The protein resides in the cell junction. Its subcellular location is the focal adhesion. It localises to the cell membrane. The protein localises to the cell projection. It is found in the lamellipodium. The protein resides in the cytoplasm. Its subcellular location is the myofibril. It localises to the sarcomere. The protein localises to the nucleus. It is found in the cytoskeleton. The protein resides in the microtubule organizing center. Its subcellular location is the centrosome. It localises to the cell cortex. In terms of biological role, scaffold protein which mediates protein-protein interactions during a range of cellular events including focal adhesion assembly, cell adhesion and cell migration. Regulates integrin-mediated signal transduction by contributing to inside-out integrin activation. Recruits PARVA and LIMS1/PITCH to form the heterotrimeric IPP (ILK-PINCH-PARVIN) complex which binds to F-actin via the C-terminal tail of LIMS1 and the N-terminal region of PARVA, promoting F-actin filament bundling, a process required to generate force for actin cytoskeleton reorganization and subsequent dynamic cell adhesion events such as cell spreading and migration. Binding to PARVA promotes effective assembly of ILK into focal adhesions while PARVA-bound ILK can simultaneously engage integrin-beta cytoplasmic tails to mediate cell adhesion. Plays a role with PARVG in promoting the cell adhesion and spreading of leukocytes. Acts as an upstream effector of both AKT1/PKB and GSK3. Mediates trafficking of caveolae to the cell surface in an ITGB1-dependent manner by promoting the recruitment of IQGAP1 to the cell cortex which cooperates with its effector DIAPH1 to locally stabilize microtubules and allow stable insertion of caveolae into the plasma membrane. Required for the maintenance of mitotic spindle integrity by promoting phosphorylation of TACC3 by AURKA. Associates with chromatin and may act as a negative regulator of transcription when located in the nucleus. This is Scaffold protein ILK from Cavia porcellus (Guinea pig).